The sequence spans 243 residues: 3-deoxy-manno-octulosonate cytidylyltransferase (243 aa).

The protein belongs to the KdsB family.

Its subcellular location is the cytoplasm. The enzyme catalyses 3-deoxy-alpha-D-manno-oct-2-ulosonate + CTP = CMP-3-deoxy-beta-D-manno-octulosonate + diphosphate. It participates in nucleotide-sugar biosynthesis; CMP-3-deoxy-D-manno-octulosonate biosynthesis; CMP-3-deoxy-D-manno-octulosonate from 3-deoxy-D-manno-octulosonate and CTP: step 1/1. The protein operates within bacterial outer membrane biogenesis; lipopolysaccharide biosynthesis. In terms of biological role, activates KDO (a required 8-carbon sugar) for incorporation into bacterial lipopolysaccharide in Gram-negative bacteria. This chain is 3-deoxy-manno-octulosonate cytidylyltransferase, found in Helicobacter pylori (strain ATCC 700392 / 26695) (Campylobacter pylori).